A 206-amino-acid polypeptide reads, in one-letter code: Small ribosomal subunit protein uS4 (206 aa).

The S4 RNA-binding domain occupies 96 to 156; the sequence is GRLDNVVYRM…EKAKKQSRVK (61 aa).

Belongs to the universal ribosomal protein uS4 family. Part of the 30S ribosomal subunit. Contacts protein S5. The interaction surface between S4 and S5 is involved in control of translational fidelity.

In terms of biological role, one of the primary rRNA binding proteins, it binds directly to 16S rRNA where it nucleates assembly of the body of the 30S subunit. Functionally, with S5 and S12 plays an important role in translational accuracy. The chain is Small ribosomal subunit protein uS4 from Salmonella typhi.